We begin with the raw amino-acid sequence, 303 residues long: Maltose/maltodextrin transport system permease protein MalG (303 aa).

Over 1–19 (MTKEEMQMAMVQPKSQRLR) the chain is Cytoplasmic. A helical membrane pass occupies residues 20–42 (LLGTHFLMLCFIALIMFPLLMVI). Topologically, residues 43–95 (AISLRPGNFATGSLIPDQISWEHWKLALGMSVTHADGSVTPPPFPVMLWLWNS) are periplasmic. An ABC transmembrane type-1 domain is found at 92–288 (LWNSIKIALI…IPITTVFLLA (197 aa)). Residues 96-118 (IKIALITAMGIVALSTTCAYAFA) traverse the membrane as a helical segment. Over 119-130 (RMRFRGKSALLK) the chain is Cytoplasmic. Residues 131–150 (GMLIFQMFPAVLSLVALYAL) traverse the membrane as a helical segment. Topologically, residues 151-159 (FDRIGQYMP) are periplasmic. A helical membrane pass occupies residues 160 to 182 (FIGLNTHGGVIFAYMGGIALHVW). The Cytoplasmic segment spans residues 183–211 (TIKGYFETIDNSLEEAAALDGATPWQAFR). The helical transmembrane segment at 212–234 (LVLLPLSVPILAVVFILSFIAAI) threads the bilayer. Residues 235–265 (TEVPVASLLLRDVNSYTLAVGMQQYLNPQNY) lie on the Periplasmic side of the membrane. The helical transmembrane segment at 266 to 288 (LWGDFAAAAVLSAIPITTVFLLA) threads the bilayer. Residues 289–303 (QRWLVGGLTAGGVKG) lie on the Cytoplasmic side of the membrane.

Belongs to the binding-protein-dependent transport system permease family. MalFG subfamily. The complex is composed of two ATP-binding proteins (MalK), two transmembrane proteins (MalG and MalF) and a solute-binding protein (MalE).

The protein localises to the cell inner membrane. Functionally, part of the ABC transporter complex MalEFGK involved in maltose/maltodextrin import. Probably responsible for the translocation of the substrate across the membrane. This chain is Maltose/maltodextrin transport system permease protein MalG (malG), found in Yersinia pestis.